The chain runs to 743 residues: Conserved oligomeric Golgi complex subunit 8 (743 aa).

2 disordered regions span residues 549–672 (EDGP…TEPE) and 704–743 (TQDD…KKDD). 4 stretches are compositionally biased toward basic and acidic residues: residues 563-581 (ESVK…HGTD), 594-621 (PVKE…HETP), 633-647 (SEAK…HLEL), and 654-664 (QEIREQEHKEV). The span at 704-726 (TQDDPIEEEEGWGWGDDDGEEQE) shows a compositional bias: acidic residues. Residues 727–743 (ISSKEVESPKEKCKKDD) are compositionally biased toward basic and acidic residues.

This sequence belongs to the COG8 family. As to quaternary structure, component of the conserved oligomeric Golgi complex which is composed of eight different subunits and is required for normal Golgi morphology and localization.

It is found in the golgi apparatus membrane. In terms of biological role, required for normal Golgi function. The sequence is that of Conserved oligomeric Golgi complex subunit 8 (cogc-8) from Caenorhabditis elegans.